A 317-amino-acid polypeptide reads, in one-letter code: tRNA-dihydrouridine(16) synthase (317 aa).

FMN-binding positions include 7–9 (PME) and Q68. C98 acts as the Proton donor in catalysis. Residues K139, 199 to 201 (NGE), and 223 to 224 (GR) contribute to the FMN site.

Belongs to the Dus family. DusC subfamily. The cofactor is FMN.

It carries out the reaction 5,6-dihydrouridine(16) in tRNA + NADP(+) = uridine(16) in tRNA + NADPH + H(+). It catalyses the reaction 5,6-dihydrouridine(16) in tRNA + NAD(+) = uridine(16) in tRNA + NADH + H(+). Functionally, catalyzes the synthesis of 5,6-dihydrouridine (D), a modified base found in the D-loop of most tRNAs, via the reduction of the C5-C6 double bond in target uridines. Specifically modifies U16 in tRNAs. In Pseudomonas syringae pv. tomato (strain ATCC BAA-871 / DC3000), this protein is tRNA-dihydrouridine(16) synthase.